Here is a 306-residue protein sequence, read N- to C-terminus: Methionyl-tRNA formyltransferase (306 aa).

Residue 109–112 participates in (6S)-5,6,7,8-tetrahydrofolate binding; the sequence is SILP.

This sequence belongs to the Fmt family.

The catalysed reaction is L-methionyl-tRNA(fMet) + (6R)-10-formyltetrahydrofolate = N-formyl-L-methionyl-tRNA(fMet) + (6S)-5,6,7,8-tetrahydrofolate + H(+). Functionally, attaches a formyl group to the free amino group of methionyl-tRNA(fMet). The formyl group appears to play a dual role in the initiator identity of N-formylmethionyl-tRNA by promoting its recognition by IF2 and preventing the misappropriation of this tRNA by the elongation apparatus. This chain is Methionyl-tRNA formyltransferase, found in Sphingopyxis alaskensis (strain DSM 13593 / LMG 18877 / RB2256) (Sphingomonas alaskensis).